We begin with the raw amino-acid sequence, 498 residues long: RuvB-like helicase 2 (498 aa).

79–86 (GPPSTGKT) provides a ligand contact to ATP. Positions 458–498 (VTIGQESTDGSTQPQAKQQEVAQPEATQPQSQPEDDKMETD) are disordered. Residues 461–489 (GQESTDGSTQPQAKQQEVAQPEATQPQSQ) are compositionally biased toward polar residues.

The protein belongs to the RuvB family. May form heterododecamers with RVB1. Component of the SWR1 chromatin remodeling complex, the INO80 chromatin remodeling complex, and of the R2TP complex.

It is found in the nucleus. The catalysed reaction is ATP + H2O = ADP + phosphate + H(+). DNA helicase which participates in several chromatin remodeling complexes, including the SWR1 and the INO80 complexes. The SWR1 complex mediates the ATP-dependent exchange of histone H2A for the H2A variant HZT1 leading to transcriptional regulation of selected genes by chromatin remodeling. The INO80 complex remodels chromatin by shifting nucleosomes and is involved in DNA repair. Also involved in pre-rRNA processing. The protein is RuvB-like helicase 2 (RVB2) of Candida albicans (strain SC5314 / ATCC MYA-2876) (Yeast).